A 283-amino-acid polypeptide reads, in one-letter code: NAD kinase (283 aa).

D69 serves as the catalytic Proton acceptor. Residues 69–70, 138–139, K166, D168, L176, 179–184, and Q235 each bind NAD(+); these read DG, NE, and TAYNLS.

It belongs to the NAD kinase family. Requires a divalent metal cation as cofactor.

The protein resides in the cytoplasm. It catalyses the reaction NAD(+) + ATP = ADP + NADP(+) + H(+). In terms of biological role, involved in the regulation of the intracellular balance of NAD and NADP, and is a key enzyme in the biosynthesis of NADP. Catalyzes specifically the phosphorylation on 2'-hydroxyl of the adenosine moiety of NAD to yield NADP. The sequence is that of NAD kinase from Helicobacter acinonychis (strain Sheeba).